The chain runs to 257 residues: Ditrans,polycis-undecaprenyl-diphosphate synthase ((2E,6E)-farnesyl-diphosphate specific) (257 aa).

The active site involves Asp-23. Asp-23 contributes to the Mg(2+) binding site. Residues 24-27 (GNGR), Trp-28, Arg-36, His-40, and 68-70 (SSE) contribute to the substrate site. Asn-71 serves as the catalytic Proton acceptor. Residues Trp-72, Arg-74, Arg-191, and 197-199 (RIS) contribute to the substrate site. Glu-210 serves as a coordination point for Mg(2+).

The protein belongs to the UPP synthase family. As to quaternary structure, homodimer. Mg(2+) is required as a cofactor.

It carries out the reaction 8 isopentenyl diphosphate + (2E,6E)-farnesyl diphosphate = di-trans,octa-cis-undecaprenyl diphosphate + 8 diphosphate. In terms of biological role, catalyzes the sequential condensation of isopentenyl diphosphate (IPP) with (2E,6E)-farnesyl diphosphate (E,E-FPP) to yield (2Z,6Z,10Z,14Z,18Z,22Z,26Z,30Z,34E,38E)-undecaprenyl diphosphate (di-trans,octa-cis-UPP). UPP is the precursor of glycosyl carrier lipid in the biosynthesis of bacterial cell wall polysaccharide components such as peptidoglycan and lipopolysaccharide. The chain is Ditrans,polycis-undecaprenyl-diphosphate synthase ((2E,6E)-farnesyl-diphosphate specific) from Xanthomonas axonopodis pv. citri (strain 306).